Here is a 350-residue protein sequence, read N- to C-terminus: Protein SGT1 homolog A (350 aa).

TPR repeat units follow at residues 2 to 35, 37 to 69, and 71 to 103; these read AKEL…DPNC, EFFA…DPSL, and KAYL…TPSE. A CS domain is found at 149–238; it reads TAKYRHEYYQ…ADIITWASLE (90 aa). Residues 260–350 form the SGS domain; sequence AYPSSKKVKD…DGMELKKWEI (91 aa).

The protein belongs to the SGT1 family. As to quaternary structure, interacts with RAR1. Forms a ternary complex with RAR1 and barley HSP90.

In terms of biological role, functions in R gene-mediated resistance, but participates in a lower extent than SGT1B to RPP5-mediated resistance. Not required for RPM1, RPS2, RPS4 and RPS5-mediated resistance. Probably required for SCF-mediated ubiquitination, by coupling HSP90 to SCF complex for ubiquitination of HSP90 client proteins. The polypeptide is Protein SGT1 homolog A (SGT1A) (Arabidopsis thaliana (Mouse-ear cress)).